The chain runs to 343 residues: Phosphoribosylformylglycinamidine cyclo-ligase (343 aa).

It belongs to the AIR synthase family.

It is found in the cytoplasm. It carries out the reaction 2-formamido-N(1)-(5-O-phospho-beta-D-ribosyl)acetamidine + ATP = 5-amino-1-(5-phospho-beta-D-ribosyl)imidazole + ADP + phosphate + H(+). Its pathway is purine metabolism; IMP biosynthesis via de novo pathway; 5-amino-1-(5-phospho-D-ribosyl)imidazole from N(2)-formyl-N(1)-(5-phospho-D-ribosyl)glycinamide: step 2/2. In Parasynechococcus marenigrum (strain WH8102), this protein is Phosphoribosylformylglycinamidine cyclo-ligase.